We begin with the raw amino-acid sequence, 107 residues long: UPF0060 membrane protein A1S_1909 (107 aa).

Helical transmembrane passes span 2 to 22, 28 to 48, 56 to 76, and 85 to 105; these read FGLF…PYLI, SAWL…LLTL, IYAA…RFVD, and ILGG…PQGL.

This sequence belongs to the UPF0060 family.

The protein resides in the cell inner membrane. The polypeptide is UPF0060 membrane protein A1S_1909 (Acinetobacter baumannii (strain ATCC 17978 / DSM 105126 / CIP 53.77 / LMG 1025 / NCDC KC755 / 5377)).